The following is a 74-amino-acid chain: Translation initiation factor IF-1, chloroplastic (74 aa).

One can recognise an S1-like domain in the interval 1-72 (MERQNLIEME…TKGRITYRLR (72 aa)).

This sequence belongs to the IF-1 family. As to quaternary structure, component of the 30S ribosomal translation pre-initiation complex which assembles on the 30S ribosome in the order IF-2 and IF-3, IF-1 and N-formylmethionyl-tRNA(fMet); mRNA recruitment can occur at any time during PIC assembly.

It is found in the plastid. The protein resides in the chloroplast. One of the essential components for the initiation of protein synthesis. Stabilizes the binding of IF-2 and IF-3 on the 30S subunit to which N-formylmethionyl-tRNA(fMet) subsequently binds. Helps modulate mRNA selection, yielding the 30S pre-initiation complex (PIC). Upon addition of the 50S ribosomal subunit IF-1, IF-2 and IF-3 are released leaving the mature 70S translation initiation complex. The protein is Translation initiation factor IF-1, chloroplastic of Mesostigma viride (Green alga).